The following is a 727-amino-acid chain: Glycerol-3-phosphate dehydrogenase, mitochondrial (727 aa).

A mitochondrion-targeting transit peptide spans 1-42 (MAFQKVVKGTILMGGGALATVLGLSQFAHYRRKQVSLAYVEA). 71–99 (DILVIGGGATGCGCALDAVTRGLKTALVE) contributes to the FAD binding site. Residue Y601 is modified to Phosphotyrosine. 2 consecutive EF-hand domains span residues 623-658 (PDIDRYKKRFHMFDEDEKGFITIVDVQRVLESINVQ) and 659-694 (MDEDTLHEILCEVDLNKNGQVELHEFLQLMSAVHTG). Positions 672, 674, 676, 678, and 683 each coordinate Ca(2+).

This sequence belongs to the FAD-dependent glycerol-3-phosphate dehydrogenase family. FAD serves as cofactor.

Its subcellular location is the mitochondrion. It catalyses the reaction a quinone + sn-glycerol 3-phosphate = dihydroxyacetone phosphate + a quinol. The protein operates within polyol metabolism; glycerol degradation via glycerol kinase pathway; glycerone phosphate from sn-glycerol 3-phosphate (anaerobic route): step 1/1. Its activity is regulated as follows. Calcium-binding enhance the activity of the enzyme. Functionally, calcium-responsive mitochondrial glycerol-3-phosphate dehydrogenase which seems to be a key component of the pancreatic beta-cell glucose-sensing device. The chain is Glycerol-3-phosphate dehydrogenase, mitochondrial from Rattus norvegicus (Rat).